The chain runs to 339 residues: Cathepsin L-like peptidase (339 aa).

Positions 1–16 (MKILILLVAFVAAANA) are cleaved as a signal peptide. The propeptide at 17-121 (VSLYELVKEE…VTFIEPANVE (105 aa)) is activation peptide. Asn95 carries N-linked (GlcNAc...) asparagine glycosylation. 3 disulfide bridges follow: Cys143/Cys186, Cys177/Cys219, and Cys278/Cys328. Residue Cys146 is part of the active site. Active-site residues include His285 and Asn306.

Belongs to the peptidase C1 family. Dimer of a heavy and a light chain linked by disulfide bonds. Interacts with cystatin; the interaction results in inhibition of cathepsin L-like peptidase activity. As to expression, salivary gland. Midgut.

It carries out the reaction Specificity close to that of papain. As compared to cathepsin B, cathepsin L exhibits higher activity toward protein substrates, but has little activity on Z-Arg-Arg-NHMec, and no peptidyl-dipeptidase activity.. Its activity is regulated as follows. More active in the presence of a reducing agent DTT. In terms of biological role, proteinase exhibiting preference for Leu, Val and Phe residues at the P2 position. This Aedes aegypti (Yellowfever mosquito) protein is Cathepsin L-like peptidase.